The sequence spans 362 residues: Heat-inducible transcription repressor HrcA (362 aa).

It belongs to the HrcA family.

Functionally, negative regulator of class I heat shock genes (grpE-dnaK-dnaJ and groELS operons). Prevents heat-shock induction of these operons. The protein is Heat-inducible transcription repressor HrcA of Bradyrhizobium sp. (strain ORS 278).